Here is a 180-residue protein sequence, read N- to C-terminus: Large ribosomal subunit protein uL5 (180 aa).

It belongs to the universal ribosomal protein uL5 family. Part of the 50S ribosomal subunit; part of the 5S rRNA/L5/L18/L25 subcomplex. Contacts the 5S rRNA and the P site tRNA. Forms a bridge to the 30S subunit in the 70S ribosome.

Functionally, this is one of the proteins that bind and probably mediate the attachment of the 5S RNA into the large ribosomal subunit, where it forms part of the central protuberance. In the 70S ribosome it contacts protein S13 of the 30S subunit (bridge B1b), connecting the 2 subunits; this bridge is implicated in subunit movement. Contacts the P site tRNA; the 5S rRNA and some of its associated proteins might help stabilize positioning of ribosome-bound tRNAs. The polypeptide is Large ribosomal subunit protein uL5 (Gloeothece citriformis (strain PCC 7424) (Cyanothece sp. (strain PCC 7424))).